A 187-amino-acid chain; its full sequence is Ribosome-recycling factor (187 aa).

Belongs to the RRF family.

It localises to the cytoplasm. Functionally, responsible for the release of ribosomes from messenger RNA at the termination of protein biosynthesis. May increase the efficiency of translation by recycling ribosomes from one round of translation to another. The sequence is that of Ribosome-recycling factor from Methylobacterium nodulans (strain LMG 21967 / CNCM I-2342 / ORS 2060).